The chain runs to 240 residues: Biosynthetic peptidoglycan transglycosylase (240 aa).

Residues 27-47 (VVLLFFFAVFALLLIFRFVPI) traverse the membrane as a helical segment.

It belongs to the glycosyltransferase 51 family.

It is found in the cell inner membrane. The catalysed reaction is [GlcNAc-(1-&gt;4)-Mur2Ac(oyl-L-Ala-gamma-D-Glu-L-Lys-D-Ala-D-Ala)](n)-di-trans,octa-cis-undecaprenyl diphosphate + beta-D-GlcNAc-(1-&gt;4)-Mur2Ac(oyl-L-Ala-gamma-D-Glu-L-Lys-D-Ala-D-Ala)-di-trans,octa-cis-undecaprenyl diphosphate = [GlcNAc-(1-&gt;4)-Mur2Ac(oyl-L-Ala-gamma-D-Glu-L-Lys-D-Ala-D-Ala)](n+1)-di-trans,octa-cis-undecaprenyl diphosphate + di-trans,octa-cis-undecaprenyl diphosphate + H(+). Its pathway is cell wall biogenesis; peptidoglycan biosynthesis. Its function is as follows. Peptidoglycan polymerase that catalyzes glycan chain elongation from lipid-linked precursors. This chain is Biosynthetic peptidoglycan transglycosylase, found in Haemophilus influenzae (strain PittEE).